The following is a 143-amino-acid chain: ATP synthase epsilon chain (143 aa).

The protein belongs to the ATPase epsilon chain family. F-type ATPases have 2 components, CF(1) - the catalytic core - and CF(0) - the membrane proton channel. CF(1) has five subunits: alpha(3), beta(3), gamma(1), delta(1), epsilon(1). CF(0) has three main subunits: a, b and c.

It is found in the cell membrane. Functionally, produces ATP from ADP in the presence of a proton gradient across the membrane. The chain is ATP synthase epsilon chain from Lacticaseibacillus casei (strain BL23) (Lactobacillus casei).